Consider the following 36-residue polypeptide: Cytochrome b6-f complex subunit 5 (36 aa).

A helical transmembrane segment spans residues 5–25 (LLSGIVLGLIPITILGLLMAA).

The protein belongs to the PetG family. The 4 large subunits of the cytochrome b6-f complex are cytochrome b6, subunit IV (17 kDa polypeptide, PetD), cytochrome f and the Rieske protein, while the 4 small subunits are PetG, PetL, PetM and PetN. The complex functions as a dimer.

It localises to the plastid. It is found in the chloroplast thylakoid membrane. Functionally, component of the cytochrome b6-f complex, which mediates electron transfer between photosystem II (PSII) and photosystem I (PSI), cyclic electron flow around PSI, and state transitions. PetG is required for either the stability or assembly of the cytochrome b6-f complex. This is Cytochrome b6-f complex subunit 5 from Cyanidioschyzon merolae (strain NIES-3377 / 10D) (Unicellular red alga).